The following is a 237-amino-acid chain: Phosphoribosylaminoimidazole-succinocarboxamide synthase (237 aa).

The protein belongs to the SAICAR synthetase family.

It catalyses the reaction 5-amino-1-(5-phospho-D-ribosyl)imidazole-4-carboxylate + L-aspartate + ATP = (2S)-2-[5-amino-1-(5-phospho-beta-D-ribosyl)imidazole-4-carboxamido]succinate + ADP + phosphate + 2 H(+). The protein operates within purine metabolism; IMP biosynthesis via de novo pathway; 5-amino-1-(5-phospho-D-ribosyl)imidazole-4-carboxamide from 5-amino-1-(5-phospho-D-ribosyl)imidazole-4-carboxylate: step 1/2. The chain is Phosphoribosylaminoimidazole-succinocarboxamide synthase from Proteus mirabilis (strain HI4320).